The primary structure comprises 317 residues: Beta-ketoacyl-[acyl-carrier-protein] synthase III (317 aa).

Catalysis depends on residues Cys112 and His244. Residues 245-249 (QANIR) form an ACP-binding region. The active site involves Asn274.

This sequence belongs to the thiolase-like superfamily. FabH family. In terms of assembly, homodimer.

Its subcellular location is the cytoplasm. The catalysed reaction is malonyl-[ACP] + acetyl-CoA + H(+) = 3-oxobutanoyl-[ACP] + CO2 + CoA. The protein operates within lipid metabolism; fatty acid biosynthesis. Its function is as follows. Catalyzes the condensation reaction of fatty acid synthesis by the addition to an acyl acceptor of two carbons from malonyl-ACP. Catalyzes the first condensation reaction which initiates fatty acid synthesis and may therefore play a role in governing the total rate of fatty acid production. Possesses both acetoacetyl-ACP synthase and acetyl transacylase activities. Its substrate specificity determines the biosynthesis of branched-chain and/or straight-chain of fatty acids. The protein is Beta-ketoacyl-[acyl-carrier-protein] synthase III of Rickettsia typhi (strain ATCC VR-144 / Wilmington).